Consider the following 331-residue polypeptide: tRNA pseudouridine synthase B (331 aa).

Asp-51 serves as the catalytic Nucleophile.

It belongs to the pseudouridine synthase TruB family. Type 1 subfamily.

The enzyme catalyses uridine(55) in tRNA = pseudouridine(55) in tRNA. Functionally, responsible for synthesis of pseudouridine from uracil-55 in the psi GC loop of transfer RNAs. The chain is tRNA pseudouridine synthase B from Verminephrobacter eiseniae (strain EF01-2).